Reading from the N-terminus, the 402-residue chain is Argininosuccinate synthase (402 aa).

Residues 10–18 (AYSGGVDTS) and Ala-38 contribute to the ATP site. Tyr-89 lines the L-citrulline pocket. Position 119 (Gly-119) interacts with ATP. L-aspartate contacts are provided by Thr-121, Asn-125, and Asp-126. Asn-125 contacts L-citrulline. 5 residues coordinate L-citrulline: Arg-129, Ser-177, Ser-186, Glu-262, and Tyr-274.

It belongs to the argininosuccinate synthase family. Type 1 subfamily. In terms of assembly, homotetramer.

Its subcellular location is the cytoplasm. The enzyme catalyses L-citrulline + L-aspartate + ATP = 2-(N(omega)-L-arginino)succinate + AMP + diphosphate + H(+). It functions in the pathway amino-acid biosynthesis; L-arginine biosynthesis; L-arginine from L-ornithine and carbamoyl phosphate: step 2/3. This Prochlorococcus marinus (strain SARG / CCMP1375 / SS120) protein is Argininosuccinate synthase.